A 375-amino-acid polypeptide reads, in one-letter code: Response regulator aspartate phosphatase E (375 aa).

A coiled-coil region spans residues 24-95; sequence NVTDAEMLKA…HKKKLDNMRA (72 aa). TPR repeat units lie at residues 96-129, 177-210, 219-252, 258-291, 297-330, and 333-366; these read YYYNFFRGMYEFRNGEYTRAITYYKKAERKIPTI, IQCHFVIAGNYDDLENHEKALPHLQEALKGAELL, ATAFFNLGNCYHKMDNLNKAARYIEQALVQYRKI, PQAYHDLALIYFKQGKKEQAMDCFRKGIRSAVDF, MNLFEALDVLYIRNGDTPKLLNIFSRLENGKGYP, and EELALLGGNLFDYNGKIEDSIICFKKMVYAQKQI.

This sequence belongs to the Rap family.

The protein resides in the cytoplasm. Its activity is regulated as follows. Phosphatase activity is inhibited by the phosphatase regulator PhrE. In terms of biological role, involved in the regulation of sporulation. Acts as a phosphatase that specifically dephosphorylates the sporulation initiation phosphotransferase Spo0F and inhibits its activity. Probably plays a dispensable role in the overall context of sporulation initiation. This chain is Response regulator aspartate phosphatase E (rapE), found in Bacillus subtilis (strain 168).